The sequence spans 322 residues: Tetraacyldisaccharide 4'-kinase (322 aa).

ATP is bound at residue 54-61 (SVGGTGKT).

The protein belongs to the LpxK family.

The enzyme catalyses a lipid A disaccharide + ATP = a lipid IVA + ADP + H(+). It participates in glycolipid biosynthesis; lipid IV(A) biosynthesis; lipid IV(A) from (3R)-3-hydroxytetradecanoyl-[acyl-carrier-protein] and UDP-N-acetyl-alpha-D-glucosamine: step 6/6. Functionally, transfers the gamma-phosphate of ATP to the 4'-position of a tetraacyldisaccharide 1-phosphate intermediate (termed DS-1-P) to form tetraacyldisaccharide 1,4'-bis-phosphate (lipid IVA). The polypeptide is Tetraacyldisaccharide 4'-kinase (Francisella philomiragia subsp. philomiragia (strain ATCC 25017 / CCUG 19701 / FSC 153 / O#319-036)).